Consider the following 337-residue polypeptide: Fructose-1,6-bisphosphatase class 1 (337 aa).

Mg(2+) is bound by residues glutamate 89, aspartate 112, leucine 114, and aspartate 115. Residues 115–118, asparagine 208, tyrosine 241, and lysine 271 each bind substrate; that span reads DGSS. Glutamate 277 is a Mg(2+) binding site.

This sequence belongs to the FBPase class 1 family. Homotetramer. It depends on Mg(2+) as a cofactor.

The protein localises to the cytoplasm. The enzyme catalyses beta-D-fructose 1,6-bisphosphate + H2O = beta-D-fructose 6-phosphate + phosphate. Its pathway is carbohydrate biosynthesis; gluconeogenesis. The protein is Fructose-1,6-bisphosphatase class 1 of Psychromonas ingrahamii (strain DSM 17664 / CCUG 51855 / 37).